The sequence spans 158 residues: uncharacterized protein (158 aa).

This is an uncharacterized protein from Mycobacterium tuberculosis (strain CDC 1551 / Oshkosh).